Consider the following 244-residue polypeptide: NAD-dependent protein deacetylase (244 aa).

The Deacetylase sirtuin-type domain occupies 1-244 (MSATERQLQY…IGDTCRQLRA (244 aa)). 8 residues coordinate NAD(+): A27, T31, F38, R39, Q107, I109, D110, and H125. F38 is a binding site for nicotinamide. Nicotinamide contacts are provided by I109 and D110. The Proton acceptor role is filled by H125. C133, C136, C153, and C156 together coordinate Zn(2+). 4 residues coordinate NAD(+): S192, S193, N217, and I235.

Belongs to the sirtuin family. Class U subfamily. The cofactor is Zn(2+).

It localises to the cytoplasm. The enzyme catalyses N(6)-acetyl-L-lysyl-[protein] + NAD(+) + H2O = 2''-O-acetyl-ADP-D-ribose + nicotinamide + L-lysyl-[protein]. In terms of biological role, NAD-dependent protein deacetylase which modulates the activities of several enzymes which are inactive in their acetylated form. The polypeptide is NAD-dependent protein deacetylase (Chromobacterium violaceum (strain ATCC 12472 / DSM 30191 / JCM 1249 / CCUG 213 / NBRC 12614 / NCIMB 9131 / NCTC 9757 / MK)).